The chain runs to 352 residues: N-acetyl-gamma-glutamyl-phosphate reductase (352 aa).

Cys151 is a catalytic residue.

This sequence belongs to the NAGSA dehydrogenase family. Type 1 subfamily.

The protein resides in the cytoplasm. It catalyses the reaction N-acetyl-L-glutamate 5-semialdehyde + phosphate + NADP(+) = N-acetyl-L-glutamyl 5-phosphate + NADPH + H(+). It functions in the pathway amino-acid biosynthesis; L-arginine biosynthesis; N(2)-acetyl-L-ornithine from L-glutamate: step 3/4. Functionally, catalyzes the NADPH-dependent reduction of N-acetyl-5-glutamyl phosphate to yield N-acetyl-L-glutamate 5-semialdehyde. This Renibacterium salmoninarum (strain ATCC 33209 / DSM 20767 / JCM 11484 / NBRC 15589 / NCIMB 2235) protein is N-acetyl-gamma-glutamyl-phosphate reductase.